The following is a 344-amino-acid chain: Protease HtpX homolog (344 aa).

Helical transmembrane passes span 8–28, 46–66, and 74–94; these read VALGLYMLGYLFMFVIAATVA, ALTGVMIVLTTAFVIYLFVLV, and VSFLVGLIAFVVLMNLLTYVA. A Zn(2+)-binding site is contributed by histidine 172. The active site involves glutamate 173. A Zn(2+)-binding site is contributed by histidine 176. A run of 2 helical transmembrane segments spans residues 183–203 and 220–240; these read AIMLLFGVLPSVVYYLGVTAV and LAVGVVAVLASFLIQLLVLAF. Glutamate 245 is a binding site for Zn(2+).

The protein belongs to the peptidase M48B family. The cofactor is Zn(2+).

Its subcellular location is the cell membrane. The protein is Protease HtpX homolog of Pyrobaculum calidifontis (strain DSM 21063 / JCM 11548 / VA1).